The primary structure comprises 291 residues: Basic helix-loop-helix protein 80 (291 aa).

A disordered region spans residues 65–120 (SAVLDTSPSVDRKRKAAEDSAHSKDSCKDGKSRRGKKASKEVEEKSTTEDEPPKGY). The segment covering 80–117 (AAEDSAHSKDSCKDGKSRRGKKASKEVEEKSTTEDEPP) has biased composition (basic and acidic residues). The Nuclear localization signal motif lies at 125–132 (ARRGQATD). A basic motif; degenerate region spans residues 129–142 (QATDSHSLAERVRR). A bHLH domain is found at 129 to 179 (QATDSHSLAERVRRERISERMRMLQALVPGCDKVTGKALILDEIINYVQSL). Positions 143–179 (ERISERMRMLQALVPGCDKVTGKALILDEIINYVQSL) are helix-loop-helix motif.

This sequence belongs to the bHLH protein family. In terms of assembly, homodimer. Interacts with IBH1, BC1 and LO9-177.

It localises to the nucleus. Together with BCL2, positive regulator of cell elongation at least partially through increased gibberellic acid (GA) biosynthesis. This chain is Basic helix-loop-helix protein 80, found in Oryza sativa subsp. indica (Rice).